The following is a 350-amino-acid chain: Cephaeline 6'-O-methyltransferase IpeOMT1 (350 aa).

Residues Gly-193, Asp-216, Asp-236, Met-237, and Lys-250 each coordinate S-adenosyl-L-methionine. Catalysis depends on His-254, which acts as the Proton acceptor.

Belongs to the class I-like SAM-binding methyltransferase superfamily. Cation-independent O-methyltransferase family. Expressed in roots.

It localises to the cytoplasm. Its subcellular location is the cytosol. It carries out the reaction cephaeline + S-adenosyl-L-methionine = emetine + S-adenosyl-L-homocysteine + H(+). The catalysed reaction is deacetylisoipecoside + S-adenosyl-L-methionine = 6-O-methyldeacetylisoipecoside + S-adenosyl-L-homocysteine + H(+). The enzyme catalyses 7-O-methyldeacetylisoipecoside + S-adenosyl-L-methionine = 6,7-O,O-dimethyldeacetylisoipecoside + S-adenosyl-L-homocysteine + H(+). It catalyses the reaction norcoclaurine + S-adenosyl-L-methionine = coclaurine + S-adenosyl-L-homocysteine + H(+). It carries out the reaction (S)-norprotosinomenine + S-adenosyl-L-methionine = (S)-6-O-methylnorprotosinomenine + S-adenosyl-L-homocysteine + H(+). The catalysed reaction is (R)-norprotosinomenine + S-adenosyl-L-methionine = (R)-6-O-methylnorprotosinomenine + S-adenosyl-L-homocysteine + H(+). It participates in alkaloid biosynthesis. O-methyltransferase involved in the biosynthesis of ipecac and benzylisoquinoline monoterpenoid-isoquinoline alkaloids natural products, starting by the condensation of dopamine and secologanin, and including emetine and cephaeline, drugs used both as anti-protozoal (e.g. treatment of ameobiasis) and as emetic agents. Mediates cephaeline 6'-O-methylation to produce emetine. Catalyzes the 6-O-methylation of N-deacetylisoipecoside, 7-O-methyl-N-deacetylisoipecoside, isococlaurine, norcoclaurine, (S)-norprotosinomenine and (R)-norprotosinomenine, and, with a lower efficiency, of 4'-O-methyllaudanosoline, isoorientaline and protosinomenine. Supports also the 4'-O-methylation of nororientaline. The chain is Cephaeline 6'-O-methyltransferase IpeOMT1 from Carapichea ipecacuanha (Ipecac).